The chain runs to 230 residues: Small ribosomal subunit protein uS7B (230 aa).

The segment at 1–22 (MSEEVVESSSQEASQVIPQEQE) is disordered. A compositionally biased stretch (low complexity) spans 7–16 (ESSSQEASQV).

The protein belongs to the universal ribosomal protein uS7 family.

This Drosophila melanogaster (Fruit fly) protein is Small ribosomal subunit protein uS7B (RpS5b).